A 202-amino-acid polypeptide reads, in one-letter code: Dephospho-CoA kinase (202 aa).

In terms of domain architecture, DPCK spans 5–202; the sequence is ILGLTGGIGS…FYLTLRGGQP (198 aa). Residue 13–18 participates in ATP binding; sequence GSGKSA.

This sequence belongs to the CoaE family.

The protein resides in the cytoplasm. It carries out the reaction 3'-dephospho-CoA + ATP = ADP + CoA + H(+). It participates in cofactor biosynthesis; coenzyme A biosynthesis; CoA from (R)-pantothenate: step 5/5. Functionally, catalyzes the phosphorylation of the 3'-hydroxyl group of dephosphocoenzyme A to form coenzyme A. In Stutzerimonas stutzeri (Pseudomonas stutzeri), this protein is Dephospho-CoA kinase.